The chain runs to 179 residues: Large ribosomal subunit protein uL15 (179 aa).

The protein belongs to the universal ribosomal protein uL15 family. As to quaternary structure, part of the 50S ribosomal subunit.

Its function is as follows. Binds to the 23S rRNA. This chain is Large ribosomal subunit protein uL15, found in Archaeoglobus fulgidus (strain ATCC 49558 / DSM 4304 / JCM 9628 / NBRC 100126 / VC-16).